Here is a 197-residue protein sequence, read N- to C-terminus: Probable nicotinate-nucleotide adenylyltransferase (197 aa).

Belongs to the NadD family.

The catalysed reaction is nicotinate beta-D-ribonucleotide + ATP + H(+) = deamido-NAD(+) + diphosphate. It functions in the pathway cofactor biosynthesis; NAD(+) biosynthesis; deamido-NAD(+) from nicotinate D-ribonucleotide: step 1/1. Its function is as follows. Catalyzes the reversible adenylation of nicotinate mononucleotide (NaMN) to nicotinic acid adenine dinucleotide (NaAD). In Bordetella avium (strain 197N), this protein is Probable nicotinate-nucleotide adenylyltransferase.